Reading from the N-terminus, the 556-residue chain is 2-isopropylmalate synthase (556 aa).

In terms of domain architecture, Pyruvate carboxyltransferase spans 33 to 307 (PIWCSSDLRD…HPQLDFSDID (275 aa)). Residues D42, H246, H248, and N282 each contribute to the Mg(2+) site. The interval 439 to 556 (ATSPYALASH…AVTQAEAKAA (118 aa)) is regulatory domain.

Belongs to the alpha-IPM synthase/homocitrate synthase family. LeuA type 2 subfamily. Homodimer. Mg(2+) is required as a cofactor.

The protein localises to the cytoplasm. It catalyses the reaction 3-methyl-2-oxobutanoate + acetyl-CoA + H2O = (2S)-2-isopropylmalate + CoA + H(+). It participates in amino-acid biosynthesis; L-leucine biosynthesis; L-leucine from 3-methyl-2-oxobutanoate: step 1/4. Functionally, catalyzes the condensation of the acetyl group of acetyl-CoA with 3-methyl-2-oxobutanoate (2-ketoisovalerate) to form 3-carboxy-3-hydroxy-4-methylpentanoate (2-isopropylmalate). The protein is 2-isopropylmalate synthase of Pseudomonas paraeruginosa (strain DSM 24068 / PA7) (Pseudomonas aeruginosa (strain PA7)).